Reading from the N-terminus, the 662-residue chain is DNA ligase (662 aa).

NAD(+) is bound by residues aspartate 32 to aspartate 36, serine 81 to leucine 82, and glutamate 112. Residue lysine 114 is the N6-AMP-lysine intermediate of the active site. Residues arginine 135, glutamate 170, lysine 286, and lysine 310 each coordinate NAD(+). Residues cysteine 402, cysteine 405, cysteine 420, and cysteine 425 each contribute to the Zn(2+) site. The BRCT domain maps to proline 583–glutamate 662.

Belongs to the NAD-dependent DNA ligase family. LigA subfamily. It depends on Mg(2+) as a cofactor. Mn(2+) serves as cofactor.

The catalysed reaction is NAD(+) + (deoxyribonucleotide)n-3'-hydroxyl + 5'-phospho-(deoxyribonucleotide)m = (deoxyribonucleotide)n+m + AMP + beta-nicotinamide D-nucleotide.. Its function is as follows. DNA ligase that catalyzes the formation of phosphodiester linkages between 5'-phosphoryl and 3'-hydroxyl groups in double-stranded DNA using NAD as a coenzyme and as the energy source for the reaction. It is essential for DNA replication and repair of damaged DNA. The chain is DNA ligase from Solibacter usitatus (strain Ellin6076).